A 318-amino-acid polypeptide reads, in one-letter code: Ribose-phosphate pyrophosphokinase 3 (318 aa).

96–101 (RQDKKD) contributes to the ATP binding site. Mg(2+) contacts are provided by Asp128, His130, Asp139, and Asp143. Residue His130 coordinates ATP. The segment at 212–227 (NDRVAILVDDMADTCV) is binding of phosphoribosylpyrophosphate.

Belongs to the ribose-phosphate pyrophosphokinase family. In terms of assembly, homodimer. The active form is probably a hexamer composed of 3 homodimers. Requires Mg(2+) as cofactor. As to expression, testis.

It catalyses the reaction D-ribose 5-phosphate + ATP = 5-phospho-alpha-D-ribose 1-diphosphate + AMP + H(+). It functions in the pathway metabolic intermediate biosynthesis; 5-phospho-alpha-D-ribose 1-diphosphate biosynthesis; 5-phospho-alpha-D-ribose 1-diphosphate from D-ribose 5-phosphate (route I): step 1/1. With respect to regulation, activated by magnesium and inorganic phosphate. In terms of biological role, catalyzes the synthesis of phosphoribosylpyrophosphate (PRPP) that is essential for nucleotide synthesis. The chain is Ribose-phosphate pyrophosphokinase 3 (PRPS1L1) from Homo sapiens (Human).